A 266-amino-acid polypeptide reads, in one-letter code: MNKSRFISCVILIFALILVLFTPNVLAESQPDPTPDELHKSSEFTGTMGNMKYLYDDHYVSATKVMSVDKFLAHDLIYNISDKKLKNYDKVKTELLNEDLAKKYKDEVVDVYGSNYYVNCYFSSKDNVGKVTGGKTCMYGGITKHEGNHFDNGNLQNVLIRVYENKRNTISFEVQTDKKSVTAQELDIKARNFLINKKNLYEFNSSPYETGYIKFIENNGNTFWYDMMPAPGDKFDQSKYLMMYNDNKTVDSKSVKIEVHLTTKNG.

Positions 1–27 (MNKSRFISCVILIFALILVLFTPNVLA) are cleaved as a signal peptide. Zn(2+) contacts are provided by Asp-36, His-74, Glu-98, Glu-107, and Asp-110. Cys-120 and Cys-137 are oxidised to a cystine. Zn(2+) contacts are provided by His-145, Glu-146, and His-149.

The protein belongs to the staphylococcal/streptococcal toxin family. As to quaternary structure, interacts with host MHC class II molecules composed of alpha/HLA-DRA and beta/HLA-DRB1 chains. It depends on Zn(2+) as a cofactor.

The protein localises to the secreted. In terms of biological role, staphylococcal enterotoxin that activates the host immune system by binding as unprocessed molecules to major histocompatibility (MHC) complex class II and T-cell receptor (TCR) molecules. In turn, this ternary complex activates a large number of T-lymphocytes initiating a systemic release of pro-inflammatory cytokines. Also causes the intoxication staphylococcal food poisoning syndrome. The chain is Enterotoxin type C-2 (entC2) from Staphylococcus aureus.